Reading from the N-terminus, the 31-residue chain is Cytochrome b6-f complex subunit 6 (31 aa).

Residues 4-24 (IISYFGFLFGALTLALILFIG) traverse the membrane as a helical segment.

It belongs to the PetL family. In terms of assembly, the 4 large subunits of the cytochrome b6-f complex are cytochrome b6, subunit IV (17 kDa polypeptide, PetD), cytochrome f and the Rieske protein, while the 4 small subunits are PetG, PetL, PetM and PetN. The complex functions as a dimer.

Its subcellular location is the plastid. It localises to the chloroplast thylakoid membrane. Functionally, component of the cytochrome b6-f complex, which mediates electron transfer between photosystem II (PSII) and photosystem I (PSI), cyclic electron flow around PSI, and state transitions. PetL is important for photoautotrophic growth as well as for electron transfer efficiency and stability of the cytochrome b6-f complex. The sequence is that of Cytochrome b6-f complex subunit 6 from Physcomitrium patens (Spreading-leaved earth moss).